The following is a 304-amino-acid chain: Acetaldehyde dehydrogenase 2 (304 aa).

Cys-131 serves as the catalytic Acyl-thioester intermediate. NAD(+) contacts are provided by residues Ser-162–Asn-170 and Asn-273.

The protein belongs to the acetaldehyde dehydrogenase family.

The enzyme catalyses acetaldehyde + NAD(+) + CoA = acetyl-CoA + NADH + H(+). In Dechloromonas aromatica (strain RCB), this protein is Acetaldehyde dehydrogenase 2.